Consider the following 409-residue polypeptide: Putative integrase/recombinase y4rA (409 aa).

A Core-binding (CB) domain is found at 112–197 (SAVEQHVQAY…ALRSFLSYAR (86 aa)). The 183-residue stretch at 220 to 402 (SIPRAIGRDD…DLDALRTLAL (183 aa)) folds into the Tyr recombinase domain. Residues arginine 260, lysine 284, histidine 354, arginine 357, and histidine 380 contribute to the active site. Tyrosine 389 serves as the catalytic O-(3'-phospho-DNA)-tyrosine intermediate.

This sequence belongs to the 'phage' integrase family.

The polypeptide is Putative integrase/recombinase y4rA (Sinorhizobium fredii (strain NBRC 101917 / NGR234)).